The sequence spans 477 residues: Bifunctional protein HldE (477 aa).

Positions 1–318 (MKVNLPAFER…ENAVRGRADT (318 aa)) are ribokinase. 195-198 (NLSE) contacts ATP. Aspartate 264 is an active-site residue. The interval 344 to 477 (MTNGVFDILH…IKKIQTESEK (134 aa)) is cytidylyltransferase.

The protein in the N-terminal section; belongs to the carbohydrate kinase PfkB family. It in the C-terminal section; belongs to the cytidylyltransferase family. As to quaternary structure, homodimer.

It catalyses the reaction D-glycero-beta-D-manno-heptose 7-phosphate + ATP = D-glycero-beta-D-manno-heptose 1,7-bisphosphate + ADP + H(+). The catalysed reaction is D-glycero-beta-D-manno-heptose 1-phosphate + ATP + H(+) = ADP-D-glycero-beta-D-manno-heptose + diphosphate. The protein operates within nucleotide-sugar biosynthesis; ADP-L-glycero-beta-D-manno-heptose biosynthesis; ADP-L-glycero-beta-D-manno-heptose from D-glycero-beta-D-manno-heptose 7-phosphate: step 1/4. It participates in nucleotide-sugar biosynthesis; ADP-L-glycero-beta-D-manno-heptose biosynthesis; ADP-L-glycero-beta-D-manno-heptose from D-glycero-beta-D-manno-heptose 7-phosphate: step 3/4. Functionally, catalyzes the phosphorylation of D-glycero-D-manno-heptose 7-phosphate at the C-1 position to selectively form D-glycero-beta-D-manno-heptose-1,7-bisphosphate. Catalyzes the ADP transfer from ATP to D-glycero-beta-D-manno-heptose 1-phosphate, yielding ADP-D-glycero-beta-D-manno-heptose. The protein is Bifunctional protein HldE of Salmonella dublin (strain CT_02021853).